Reading from the N-terminus, the 938-residue chain is Myocardin (938 aa).

The MEF2C-binding signature appears at 12–27; it reads IRSKFRSVLQLRLQQR. An RPEL 1 repeat occupies 18 to 43; the sequence is SVLQLRLQQRRTQEQLANQGIIPPLK. The span at 48-61 shows a compositional bias: basic and acidic residues; it reads FHEQRKHLDSDKAK. The interval 48-68 is disordered; the sequence is FHEQRKHLDSDKAKNSLKRKA. RPEL repeat units lie at residues 62-87 and 106-131; these read NSLKRKARNRCNSADLVNMHILQAST and DDLNEKIALRPGPLELVEKNILPVDS. The segment at 153–205 is HDAC5-binding; the sequence is FEEDSSSDGLSPDQTRSEDPQNSAGSPPDAKASDTPSTGSLGTNQDLASGSEN. The tract at residues 154-281 is disordered; that stretch reads EEDSSSDGLS…DQKAEKSPPP (128 aa). Composition is skewed to polar residues over residues 159–177, 186–203, and 210–220; these read SDGLSPDQTRSEDPQNSAG, DTPSTGSLGTNQDLASGS, and SASQPSHQSDA. The span at 248–265 shows a compositional bias: basic residues; that stretch reads NRHKKPKDPKPKVKKLKY. The region spanning 371–405 is the SAP domain; the sequence is LDDLKVSELRQQLRIRGLPVSGTKTALMDRLRPFQ. Phosphoserine; by GSK3-beta occurs at positions 451, 455, 459, and 463. Positions 516–561 form a coiled coil; sequence EKDKMLVEKQKVINELTWKLQQEQRQVEELRMQLQKQKRNNCSEKK. 4 positions are modified to phosphoserine; by GSK3-beta: Ser-626, Ser-630, Ser-634, and Ser-638. Disordered regions lie at residues 635 to 678 and 693 to 734; these read PQHS…SSPI and SDKV…MTRS. A compositionally biased stretch (low complexity) spans 699–715; sequence KFSIPSPTFSKSSSAIS. The tract at residues 717–938 is required for interaction with and ubiquitination by STUB1; sequence VTQPPSYEDA…SSMDLHLQQW (222 aa). Phosphoserine; by MAPK1 and MAPK3 occurs at positions 815, 862, and 869. Phosphothreonine; by MAPK1 and MAPK3 is present on Thr-896.

In terms of assembly, homodimer. Interacts with SRF, its association does not depend on specific DNA sequences for ternary complex formation. Interacts with MLLT7/FOXO4. Interacts (via C-terminal) with EP300 (via the CREB-binding domain). Interacts with HDAC4 and HDAC5. Interacts with MEF2C. Interacts (via C-terminus) with STUB1/CHIP. Interacts with PURB. In terms of processing, ubiquitinated; by STUB1/CHIP at the C-terminus, leading to its degradation by the proteasome. Phosphorylation by GSK3B is required for STUB1/CHIP-mediated ubiquitination. Post-translationally, phosphorylation negatively regulates the intrinsic myocardin transcriptional activity. Phosphorylated; by GSK3B. As to expression, expressed in the heart, aorta and bladder. Expressed in smooth muscle cell-containing tissues: stomach, small intestine, colon, lung, placenta and uterus. Very faint expression in prostate and skeletal muscle.

Its subcellular location is the nucleus. Functionally, smooth muscle cells (SM) and cardiac muscle cells-specific transcriptional factor which uses the canonical single or multiple CArG boxes DNA sequence. Acts as a cofactor of serum response factor (SRF) with the potential to modulate SRF-target genes. Plays a crucial role in cardiogenesis, urinary bladder development, and differentiation of the smooth muscle cell lineage (myogenesis). Positively regulates the transcription of genes involved in vascular smooth muscle contraction. In Homo sapiens (Human), this protein is Myocardin (MYOCD).